The primary structure comprises 75 residues: UPF0154 protein MYPU_1460 (75 aa).

Residues Gly-8 to Val-28 traverse the membrane as a helical segment.

Belongs to the UPF0154 family.

The protein resides in the membrane. The chain is UPF0154 protein MYPU_1460 from Mycoplasmopsis pulmonis (strain UAB CTIP) (Mycoplasma pulmonis).